The following is a 282-amino-acid chain: Pantothenate synthetase (282 aa).

ATP is bound at residue 29–36 (MGFLHEGH). The active-site Proton donor is His-36. Gln-60 is a binding site for (R)-pantoate. A beta-alanine-binding site is contributed by Gln-60. ATP is bound at residue 146-149 (GEKD). Gln-152 is a (R)-pantoate binding site. ATP-binding positions include Ile-175 and 183–186 (KSSR).

It belongs to the pantothenate synthetase family. Homodimer.

The protein resides in the cytoplasm. It carries out the reaction (R)-pantoate + beta-alanine + ATP = (R)-pantothenate + AMP + diphosphate + H(+). Its pathway is cofactor biosynthesis; (R)-pantothenate biosynthesis; (R)-pantothenate from (R)-pantoate and beta-alanine: step 1/1. In terms of biological role, catalyzes the condensation of pantoate with beta-alanine in an ATP-dependent reaction via a pantoyl-adenylate intermediate. The sequence is that of Pantothenate synthetase from Clostridioides difficile (strain 630) (Peptoclostridium difficile).